The chain runs to 294 residues: Glyceraldehyde-3-phosphate dehydrogenase (294 aa).

Residues Asp19, Lys63, and Thr105 each coordinate NAD(+). D-glyceraldehyde 3-phosphate is bound by residues 134–136 (SCT), Thr165, 194–195 (TG), and Arg217. Catalysis depends on Cys135, which acts as the Nucleophile.

This sequence belongs to the glyceraldehyde-3-phosphate dehydrogenase family. In terms of assembly, homotetramer.

Its subcellular location is the cytoplasm. The enzyme catalyses D-glyceraldehyde 3-phosphate + phosphate + NAD(+) = (2R)-3-phospho-glyceroyl phosphate + NADH + H(+). It functions in the pathway carbohydrate degradation; glycolysis; pyruvate from D-glyceraldehyde 3-phosphate: step 1/5. Its function is as follows. Catalyzes the oxidative phosphorylation of glyceraldehyde 3-phosphate (G3P) to 1,3-bisphosphoglycerate (BPG) using the cofactor NAD. The first reaction step involves the formation of a hemiacetal intermediate between G3P and a cysteine residue, and this hemiacetal intermediate is then oxidized to a thioester, with concomitant reduction of NAD to NADH. The reduced NADH is then exchanged with the second NAD, and the thioester is attacked by a nucleophilic inorganic phosphate to produce BPG. The chain is Glyceraldehyde-3-phosphate dehydrogenase (gap) from Klebsiella aerogenes (Enterobacter aerogenes).